Here is a 555-residue protein sequence, read N- to C-terminus: MARVEL domain-containing protein 2 (555 aa).

The segment covering 1-20 (MSSSDARSRIRDRGYSEVPR) has biased composition (basic and acidic residues). Positions 1–71 (MSSSDARSRI…FYSSDTEEPA (71 aa)) are disordered. Residues 1–191 (MSSSDARSRI…YMKSWAGLLR (191 aa)) are Cytoplasmic-facing. Positions 46 to 59 (PLPPPPLPLQPPFG) are enriched in pro residues. Phosphoserine occurs at positions 117, 121, and 158. The interval 118-142 (PPASPARANHHPYKDPSRGSQGTFN) is disordered. Thr-163 carries the phosphothreonine modification. One can recognise an MARVEL domain in the interval 185–364 (SWAGLLRILG…SALVCLKLWR (180 aa)). A helical membrane pass occupies residues 192–212 (ILGVVELLLGAGVFACVTAYI). The Extracellular segment spans residues 213 to 251 (HKDNEWYNLFGYTQPYGMGGLGSLGNTYGGYYYSGPKTP). Residues 252–272 (FVLVVAGLAWITTIIILVLGM) form a helical membrane-spanning segment. Topologically, residues 273–288 (SMYYRTILLDSNWWPL) are cytoplasmic. The chain crosses the membrane as a helical span at residues 289–309 (TEFGVNVALFILYMAAAIVYV). Topologically, residues 310–338 (NDTNRGGLCYYPLFNTPMNAMFCRVEGGQ) are extracellular. The helical transmembrane segment at 339-359 (IAAMIFLFVTMIVYLVSALVC) threads the bilayer. The Cytoplasmic segment spans residues 360 to 555 (LKLWRHEAAR…VMNWDTQGYP (196 aa)). Ser-384 carries the phosphoserine modification. Lys-408 participates in a covalent cross-link: Glycyl lysine isopeptide (Lys-Gly) (interchain with G-Cter in ubiquitin). Residues 437–548 (PDYVAKYPVI…RIQEYDKVMN (112 aa)) form the OCEL domain. The stretch at 521–545 (EKKERCDYLKNKLSHIKQRIQEYDK) forms a coiled coil.

The protein belongs to the ELL/occludin family. As to quaternary structure, interacts with TJP1. Interacts with the ubiquitin ligase ITCH. Interacts (via C-terminal cytoplasmic domain) with LSR (via the cytoplasmic domain), ILDR1 and ILDR2; the interaction is required to recruit MARVELD2 to tricellular contacts. Post-translationally, ubiquitinated by ITCH; but this ubiquitination does not lead to proteasomal degradation. Polyubiquitinated at Lys-408 via 'Lys-63'-linked ubiquitin chains; deubiquitinated by USP53. In terms of processing, phosphorylated. In terms of tissue distribution, detected in small intestine, stomach and kidney, in epithelial cells. Detected in pancreas, retina and lung, and in stria vascularis, utricle and the organ of Conti in the inner ear (at protein level). Predominantly detected in small intestine, lung and kidney, with lower levels in liver, testis and brain. In colon, expressed in the entire crypts.

Its subcellular location is the cell membrane. The protein localises to the cell junction. The protein resides in the tight junction. Functionally, plays a role in the formation of tricellular tight junctions and of epithelial barriers. Required for normal hearing via its role in the separation of the endolymphatic and perilymphatic spaces of the organ of Corti in the inner ear, and for normal survival of hair cells in the organ of Corti. The sequence is that of MARVEL domain-containing protein 2 from Mus musculus (Mouse).